Reading from the N-terminus, the 289-residue chain is ATP synthase gamma chain (289 aa).

Belongs to the ATPase gamma chain family. As to quaternary structure, F-type ATPases have 2 components, CF(1) - the catalytic core - and CF(0) - the membrane proton channel. CF(1) has five subunits: alpha(3), beta(3), gamma(1), delta(1), epsilon(1). CF(0) has three main subunits: a, b and c.

The protein localises to the cell inner membrane. Produces ATP from ADP in the presence of a proton gradient across the membrane. The gamma chain is believed to be important in regulating ATPase activity and the flow of protons through the CF(0) complex. This Dichelobacter nodosus (strain VCS1703A) protein is ATP synthase gamma chain.